Here is a 201-residue protein sequence, read N- to C-terminus: Calcium channel flower (201 aa).

The next 3 membrane-spanning stretches (helical) occupy residues 37 to 57 (LGIV…LSII), 59 to 79 (LSVS…VVMA), and 103 to 120 (PMYF…PPIF).

This sequence belongs to the calcium channel flower family. Homomultimer. Associates with the dally/ magu complex.

The protein resides in the cell membrane. The protein localises to the cytoplasmic vesicle. Its subcellular location is the secretory vesicle. It is found in the synaptic vesicle membrane. It localises to the presynaptic cell membrane. The protein resides in the endosome. With respect to regulation, channel activity is inhibited by La(3+), which reduces Ca(2+) influx and thus inhibits it's function in promoting activity-dependent bulk endocytosis (ADBE) in response to high stimuli. In terms of biological role, transmembrane protein which mediates synaptic endocytosis, fitness-based cell culling, neuronal culling, morphogen gradient scaling, and calcium transport. Regulates synaptic endocytosis and hence couples exo- with endocytosis. Controls two major modes of synaptic vesicle (SV) endocytosis in the synaptic boutons of neuromuscular junctions (NMJs); Ca(2+) channel-independent Clathrin-mediated endocytosis (CME) in response to mild stimulation, and Ca(2+) channel-dependent activity-dependent bulk endocytosis (ADBE) in response to strong stimulation. Functions in ADBE and subsequent SV reformation from bulk endosomes by initiating Ca(2+) channel-dependent phosphatidylinositol 4,5-bisphosphate (PtdIns(4,5)P2) compartmentalization in synaptic boutons. There it acts at the periactive zone to provide the low Ca(2+) levels required to initiate Calcineurin activation and upregulate PtdIns(4,5)P2. Conversely PtdIns(4,5)P2 enhances fwe Ca(2+) channel-activity, establishing a positive feedback loop that induces PtdIns(4,5)P2 microdomain at the periactive zone. These microdomains trigger bulk membrane invagination (i.e. ADBE) by triggering actin polymerization while also promoting localization of fwe to bulk endosomes, thereby removing the ADBE trigger to reduce endocytosis and prevent excess membrane uptake. PtdIns(4,5)P2 then promotes SV reformation from the bulk endosomes, to coordinate ADBE and subsequent SV reformation. Different combinations of the flower isoforms at the cell membrane are also required for the identification and elimination of suboptimal or supernumerary cells during development, regeneration, and adulthood. Required for the recognition and elimination of unfit cells in the developing wing during cell competition. In the developing pupal retina, mediates the elimination of unwanted postmitotic neurons, including supernumerary photoreceptor neurons that form at the periphery of the retina and are contained within incomplete ommatidia units. Also required for efficient elimination and replacement of old neurons by newly generated neurons during regeneration in the adult brain following mechanical injury. Downstream of the flower fitness fingerprints, cells identified as unwanted or unfit are eliminated via apoptosis through the expression of ahuizotl (azot). However, the cells marked for elimination by the flower isoforms only undergo apoptosis if additional thresholds are met; (1) their neighboring fit/healthy cells express different levels of the fwe isoforms, and (2) the levels of the protective signal SPARC expressed by the loser or unwanted cells are unable to inhibit caspase activation. These additional thresholds for flower-mediated apoptosis, allows useful cells to recover from transient and limited stress before they are unnecessarily eliminated. Functions with dally and magu in a mechanism of scaling, which utilises apoptosis to ensure that the dpp morphogen gradient, which mediates organ growth, remains proportional to the size of the growing wing. In this mechanism, fwe represses dally- and Magu-dependent activity in expanding the gradient, and dally/Magu inhibits fwe-dependent apoptosis to keep cell death rate low. When the levels of these different proteins are optimally regulated the gradient correctly scales with organ growth but when this fails, fwe-mediated apoptosis is activated to trim the developing tissue to match the correct size of the gradient. The protein is Calcium channel flower of Drosophila willistoni (Fruit fly).